Reading from the N-terminus, the 185-residue chain is Photosystem I assembly protein Ycf4 (185 aa).

A run of 2 helical transmembrane segments spans residues 24-44 (YLIG…SISS) and 66-86 (IIMG…WYLV).

The protein belongs to the Ycf4 family.

The protein localises to the cellular thylakoid membrane. In terms of biological role, seems to be required for the assembly of the photosystem I complex. In Prochlorococcus marinus (strain MIT 9515), this protein is Photosystem I assembly protein Ycf4.